Consider the following 273-residue polypeptide: E3 ubiquitin-protein ligase SDIR1 (273 aa).

Residues 1 to 33 are Cytoplasmic-facing; the sequence is MSFVFRGSRGDLESGFSGGFLPERRAMRVHGAR. The chain crosses the membrane as a helical span at residues 34–54; it reads PVNSNSLAFLVTVLLLFMILN. Residues 55–56 lie on the Lumenal side of the membrane; that stretch reads SH. Residues 57 to 77 traverse the membrane as a helical segment; the sequence is QMPPNFLLWLVLGVFLMATTL. Residues 78 to 273 lie on the Cytoplasmic side of the membrane; it reads RMYATCQQLQ…EIDDDASDMV (196 aa). Residues 211–252 form an RING-type; atypical zinc finger; the sequence is CSVCLEQVTVGEIVRTLPCLHQFHAGCIDPWLRQQGTCPVCK.

Interacts with ATP1/SDIRIP1. Ubiquitous.

The protein resides in the endoplasmic reticulum membrane. The catalysed reaction is S-ubiquitinyl-[E2 ubiquitin-conjugating enzyme]-L-cysteine + [acceptor protein]-L-lysine = [E2 ubiquitin-conjugating enzyme]-L-cysteine + N(6)-ubiquitinyl-[acceptor protein]-L-lysine.. Its function is as follows. E3 ubiquitin-protein ligase that acts as a positive regulator of abscisic acid-related stress signal transduction. Interacts with and ubiquitinates ATP1/SDIRIP1 to modulate ATP1/SDIRIP1 stability through the 26S proteasome pathway. Regulates abscisic acid (ABA) and salt stress responses by negatively affecting ATP1/SDIRIP1 stability. The SDIR1-ATP1/SDIRIP1 complex plays an important role in ABA signaling through the ubiquitination pathway. The chain is E3 ubiquitin-protein ligase SDIR1 from Arabidopsis thaliana (Mouse-ear cress).